We begin with the raw amino-acid sequence, 562 residues long: Bacillolysin (562 aa).

The first 24 residues, 1 to 24 (MKKKKQALKVLLSVGILSSSFAFA), serve as a signal peptide directing secretion. Positions 25-245 (HTSSAAPNNV…KQAAKPAAKP (221 aa)) are cleaved as a propeptide — activation peptide. D303, D305, and D384 together coordinate Ca(2+). H388 contacts Zn(2+). The active site involves E389. Zn(2+)-binding residues include H392 and E412. Ca(2+) is bound by residues E423, N429, D431, E433, E436, Y439, T440, and D446. H477 acts as the Proton donor in catalysis.

It belongs to the peptidase M4 family. Ca(2+) is required as a cofactor. The cofactor is Zn(2+).

Its subcellular location is the secreted. It carries out the reaction Similar, but not identical, to that of thermolysin.. Extracellular zinc metalloprotease. The sequence is that of Bacillolysin from Priestia megaterium (strain ATCC 14581 / DSM 32 / CCUG 1817 / JCM 2506 / NBRC 15308 / NCIMB 9376 / NCTC 10342 / NRRL B-14308 / VKM B-512 / Ford 19) (Bacillus megaterium).